A 149-amino-acid chain; its full sequence is UPF0179 protein Hlac_2319 (149 aa).

This sequence belongs to the UPF0179 family.

The polypeptide is UPF0179 protein Hlac_2319 (Halorubrum lacusprofundi (strain ATCC 49239 / DSM 5036 / JCM 8891 / ACAM 34)).